Consider the following 205-residue polypeptide: MSKRESAKHKIDRRLGENIWGRPKSPVNRREYGPGQHGQRRKGKLSDFGVQLRAKQKLKGFYGDISEKQFRKTYEEAARRKGDTGENLIGLLESRLDAVVYRAKFVPTIFAARQFINHGHVNVNGRRVNIQSYRLKVGDVVEVREKSKQLAIVLEAVQLAERDVPDYIDVDHNKMVATYNRVPGLSDVPYAVQMEPNLVVEFYSR.

Residues 1–16 (MSKRESAKHKIDRRLG) are compositionally biased toward basic and acidic residues. The interval 1–46 (MSKRESAKHKIDRRLGENIWGRPKSPVNRREYGPGQHGQRRKGKLS) is disordered. Residues 94 to 157 (SRLDAVVYRA…KQLAIVLEAV (64 aa)) enclose the S4 RNA-binding domain.

Belongs to the universal ribosomal protein uS4 family. As to quaternary structure, part of the 30S ribosomal subunit. Contacts protein S5. The interaction surface between S4 and S5 is involved in control of translational fidelity.

Its function is as follows. One of the primary rRNA binding proteins, it binds directly to 16S rRNA where it nucleates assembly of the body of the 30S subunit. Functionally, with S5 and S12 plays an important role in translational accuracy. In Brucella abortus (strain S19), this protein is Small ribosomal subunit protein uS4.